The sequence spans 424 residues: MPVHLAINNGTPVRTRPWPVWPQPARGALDALERVLRSGRWAISGPYRGIESAERRFARDFAAYNGVAHCVPAASGTASLMLALESCGVGVGDEVIAPGLSWVASASTIVGVNAVPVLVDIDPRTLCLDPAAVEAAITPATKAVVVVHLYSAVADLDALRAVADRHGLPLIEDCAQAHGAEHRGRKVGSVGDVGTFSMQHSKVLTSGEGGAAITNSAELARRMEHLRADGRCYPDTAPAPGRMELVETGELMGSNRCLSEFQAAVLVEQLRELDEQNALRRRNAELLNTLLAEQGLRPQATSPGTTSRTYYVYAAELPDDAFVGLPITTVTEALTAELGFPISPAYAPLHTNRLYAPASRRRFALGEEHEKRIDPARFHLPVCERLTRRLITFHHAALLGDESDMHDIAAAVAKVLRHHGELRA.

Lysine 202 bears the N6-(pyridoxal phosphate)lysine mark.

It belongs to the DegT/DnrJ/EryC1 family. L-glutamine:2-deoxy-scyllo-inosose/scyllo-inosose aminotransferase subfamily. Requires pyridoxal 5'-phosphate as cofactor.

The catalysed reaction is 2-deoxy-L-scyllo-inosose + L-glutamine = 2-deoxy-scyllo-inosamine + 2-oxoglutaramate. It catalyses the reaction 3-amino-2,3-dideoxy-scyllo-inosose + L-glutamine = 2-deoxystreptamine + 2-oxoglutaramate. It participates in metabolic intermediate biosynthesis; 2-deoxystreptamine biosynthesis; 2-deoxystreptamine from D-glucose 6-phosphate: step 2/4. The protein operates within antibiotic biosynthesis; tobramycin biosynthesis. In terms of biological role, catalyzes the PLP-dependent transamination of 2-deoxy-scyllo-inosose (2-DOI) to form 2-deoxy-scyllo-inosamine (2-DOIA) using L-glutamine as the amino donor. Also catalyzes the transamination of 3-amino-2,3-dideoxy-scyllo-inosose (keto-2-DOIA) into 2-deoxystreptamine (2-DOS). This is L-glutamine:2-deoxy-scyllo-inosose aminotransferase (tbmB) from Streptoalloteichus tenebrarius (strain ATCC 17920 / DSM 40477 / JCM 4838 / CBS 697.72 / NBRC 16177 / NCIMB 11028 / NRRL B-12390 / A12253. 1 / ISP 5477) (Streptomyces tenebrarius).